The following is a 471-amino-acid chain: 3-isopropylmalate dehydratase large subunit (471 aa).

The [4Fe-4S] cluster site is built by cysteine 349, cysteine 409, and cysteine 412.

The protein belongs to the aconitase/IPM isomerase family. LeuC type 1 subfamily. Heterodimer of LeuC and LeuD. It depends on [4Fe-4S] cluster as a cofactor.

The enzyme catalyses (2R,3S)-3-isopropylmalate = (2S)-2-isopropylmalate. It functions in the pathway amino-acid biosynthesis; L-leucine biosynthesis; L-leucine from 3-methyl-2-oxobutanoate: step 2/4. Catalyzes the isomerization between 2-isopropylmalate and 3-isopropylmalate, via the formation of 2-isopropylmaleate. The polypeptide is 3-isopropylmalate dehydratase large subunit (Aliivibrio fischeri (strain ATCC 700601 / ES114) (Vibrio fischeri)).